A 199-amino-acid polypeptide reads, in one-letter code: Recombination protein RecR (199 aa).

The segment at 58–73 (CKTCGNIDTQSPCTVC) adopts a C4-type zinc-finger fold. The Toprim domain maps to 81–176 (AMIVVVADVA…KVTRLAHGVP (96 aa)).

Belongs to the RecR family.

May play a role in DNA repair. It seems to be involved in an RecBC-independent recombinational process of DNA repair. It may act with RecF and RecO. The sequence is that of Recombination protein RecR from Bradyrhizobium sp. (strain ORS 278).